A 592-amino-acid chain; its full sequence is Aspartate--tRNA ligase (592 aa).

L-aspartate is bound at residue E173. Positions 197-200 (QLFK) are aspartate. R219 serves as a coordination point for L-aspartate. Residues 219–221 (RDE) and Q228 each bind ATP. Residue H448 coordinates L-aspartate. An ATP-binding site is contributed by E482. An L-aspartate-binding site is contributed by R489. Position 534 to 537 (534 to 537 (GLDR)) interacts with ATP.

The protein belongs to the class-II aminoacyl-tRNA synthetase family. Type 1 subfamily. In terms of assembly, homodimer.

It is found in the cytoplasm. It carries out the reaction tRNA(Asp) + L-aspartate + ATP = L-aspartyl-tRNA(Asp) + AMP + diphosphate. Its function is as follows. Catalyzes the attachment of L-aspartate to tRNA(Asp) in a two-step reaction: L-aspartate is first activated by ATP to form Asp-AMP and then transferred to the acceptor end of tRNA(Asp). In Shewanella baltica (strain OS223), this protein is Aspartate--tRNA ligase.